Consider the following 320-residue polypeptide: MTSTGLSTNKPIIKALNISNVVISNVVVANKLRNKKAPIHYNDGKLVFQTPYLTANSILVQTSTPNIYQFDTVFKGKSKKRCKELFDFIDTLESDIANKIIRNGMNWFTTSDISIKSLIRQNNDETFFIRWLLDLSSCVFIDDSKNQINPHESLDVKDLVRFIVEVKGAFVQDNKIGLAVIVHKIRVKKPEPKDKVVPEYDFDSESESDNSEEKRFVPVLETEKAPHSKNTRIIQTNQSREYDLDYNQPKNPKQTTLKNTLDTRSKNNSNTTKQIFEQDDIFSDDDNAEQLVAKISPRPERSNKSKHKIADNFGYGGFFE.

The tract at residues 196–273 (VVPEYDFDSE…RSKNNSNTTK (78 aa)) is disordered. A compositionally biased stretch (acidic residues) spans 200 to 210 (YDFDSESESDN). Positions 211–226 (SEEKRFVPVLETEKAP) are enriched in basic and acidic residues. The segment covering 248 to 273 (QPKNPKQTTLKNTLDTRSKNNSNTTK) has biased composition (polar residues).

This is an uncharacterized protein from Acanthamoeba polyphaga mimivirus (APMV).